Reading from the N-terminus, the 228-residue chain is ATP synthase F(0) complex subunit a (228 aa).

5 helical membrane passes run asparagine 13–methionine 33, tryptophan 69–leucine 89, glutamine 98–leucine 118, isoleucine 139–valine 159, and isoleucine 194–phenylalanine 214.

This sequence belongs to the ATPase A chain family. As to quaternary structure, component of the ATP synthase complex composed at least of ATP5F1A/subunit alpha, ATP5F1B/subunit beta, ATP5MC1/subunit c (homooctomer), MT-ATP6/subunit a, MT-ATP8/subunit 8, ATP5ME/subunit e, ATP5MF/subunit f, ATP5MG/subunit g, ATP5MK/subunit k, ATP5MJ/subunit j, ATP5F1C/subunit gamma, ATP5F1D/subunit delta, ATP5F1E/subunit epsilon, ATP5PF/subunit F6, ATP5PB/subunit b, ATP5PD/subunit d, ATP5PO/subunit OSCP. ATP synthase complex consists of a soluble F(1) head domain (subunits alpha(3) and beta(3)) - the catalytic core - and a membrane F(0) domain - the membrane proton channel (subunits c, a, 8, e, f, g, k and j). These two domains are linked by a central stalk (subunits gamma, delta, and epsilon) rotating inside the F1 region and a stationary peripheral stalk (subunits F6, b, d, and OSCP). Interacts with DNAJC30; interaction is direct.

The protein localises to the mitochondrion inner membrane. It carries out the reaction H(+)(in) = H(+)(out). Subunit a, of the mitochondrial membrane ATP synthase complex (F(1)F(0) ATP synthase or Complex V) that produces ATP from ADP in the presence of a proton gradient across the membrane which is generated by electron transport complexes of the respiratory chain. ATP synthase complex consist of a soluble F(1) head domain - the catalytic core - and a membrane F(1) domain - the membrane proton channel. These two domains are linked by a central stalk rotating inside the F(1) region and a stationary peripheral stalk. During catalysis, ATP synthesis in the catalytic domain of F(1) is coupled via a rotary mechanism of the central stalk subunits to proton translocation. With the subunit c (ATP5MC1), forms the proton-conducting channel in the F(0) domain, that contains two crucial half-channels (inlet and outlet) that facilitate proton movement from the mitochondrial intermembrane space (IMS) into the matrix. Protons are taken up via the inlet half-channel and released through the outlet half-channel, following a Grotthuss mechanism. This Pelomedusa subrufa (African side-necked turtle) protein is ATP synthase F(0) complex subunit a.